Consider the following 515-residue polypeptide: Rop guanine nucleotide exchange factor 12 (515 aa).

The PRONE domain maps to 83-446 (QARERQLLAD…RAGNKRNTPL (364 aa)). A Phosphoserine modification is found at Ser-510.

As to quaternary structure, interacts (via C-terminus) with PRK2. Interacts with PRK6. In terms of tissue distribution, expressed in pollen grains.

Its subcellular location is the cytoplasm. It localises to the cell membrane. With respect to regulation, phosphorylation at Ser-510 by PRK2 may release ROPGEF12 auto-inhibition, thereby activating ROPGEF12 and downstream Rop signaling. In terms of biological role, guanine-nucleotide exchange factor (GEF) that acts as an activator of Rop (Rho of plants) GTPases by promoting the exchange of GDP for GTP. May be recruited by PRK2 at the plasma membrane to maintain polar Rop activity in the pollen tube and control polarized pollen tube growth. In Arabidopsis thaliana (Mouse-ear cress), this protein is Rop guanine nucleotide exchange factor 12.